Consider the following 653-residue polypeptide: Large subunit GTPase 1 homolog (653 aa).

The segment at 1–31 (MGRRRAPAGGSLGRALMRHQTQRSRSHRHTD) is disordered. Residues 16–28 (LMRHQTQRSRSHR) are compositionally biased toward basic residues. Phosphoserine is present on residues Ser93 and Ser97. The region spanning 164–445 (WRQLWRVIER…LCDCPGLVMP (282 aa)) is the CP-type G domain. 212-215 (NKAD) is a binding site for GTP. Residues 251-358 (DSEEEANKDD…RKTPQKRQLH (108 aa)) form a disordered region. Ser252 carries the phosphoserine modification. The segment covering 258 to 288 (KDDRQSNTAEFEHSSFDEAEISHSETEHLPA) has biased composition (basic and acidic residues). The span at 299–333 (TTDEDDSEYEDCPEEEEDDWQTCSEEDGPEEEDCG) shows a compositional bias: acidic residues. GTP contacts are provided by residues 394 to 401 (GYPNVGKS) and 438 to 441 (DCPG). The segment at 630–653 (SENGAGKPWKKHGNRNKKEKSCRL) is disordered. Over residues 637–647 (PWKKHGNRNKK) the composition is skewed to basic residues.

The protein belongs to the TRAFAC class YlqF/YawG GTPase family. LSG1 subfamily.

It is found in the cytoplasm. Its subcellular location is the endoplasmic reticulum. It localises to the nucleus. The protein resides in the cajal body. The enzyme catalyses GTP + H2O = GDP + phosphate + H(+). In terms of biological role, functions as a GTPase. May act by mediating the release of NMD3 from the 60S ribosomal subunit after export into the cytoplasm during the 60S ribosomal subunit maturation. This chain is Large subunit GTPase 1 homolog, found in Macaca fascicularis (Crab-eating macaque).